Reading from the N-terminus, the 357-residue chain is MELWQAFVQMVYTLTPWFDGTIASILIILIKAITLVIPLMLVVAYFTYAERKVIGYMQLRIGPNRVGPKGWLQPIADALKLMTKEIIFPTKANIYLFLLAPVLAIAPAIAVWVVIPFDEDIYITNLDISLLYVLAIGSIGVYGIILAGWASNSKYPLLGALRSASLLVSYEIVIGFALATVVMIAGSVNLNTIVQAQQGGIIYWNFIPLFPMMIIFFISALIETNRAPFDVVEGESEIVGGTHVEYSGMTFAVFFLAEYANMILMAVLAVVMFFGGWHSPFEAIPYLESAFSWVPGIIWLLAKTTFFMFLYLWVRATFPRFRYDQIMRLSWKVFLPITIIWIFVVALMTQLKLEPWF.

The next 8 membrane-spanning stretches (helical) occupy residues 25 to 45 (ILIILIKAITLVIPLMLVVAY), 94 to 114 (IYLFLLAPVLAIAPAIAVWVV), 130 to 150 (LLYVLAIGSIGVYGIILAGWA), 166 to 186 (LLVSYEIVIGFALATVVMIAG), 201 to 221 (IIYWNFIPLFPMMIIFFISAL), 254 to 274 (FFLAEYANMILMAVLAVVMFF), 294 to 314 (VPGIIWLLAKTTFFMFLYLWV), and 329 to 349 (LSWKVFLPITIIWIFVVALMT).

The protein belongs to the complex I subunit 1 family. In terms of assembly, NDH-1 is composed of 14 different subunits. Subunits NuoA, H, J, K, L, M, N constitute the membrane sector of the complex.

Its subcellular location is the cell inner membrane. The catalysed reaction is a quinone + NADH + 5 H(+)(in) = a quinol + NAD(+) + 4 H(+)(out). NDH-1 shuttles electrons from NADH, via FMN and iron-sulfur (Fe-S) centers, to quinones in the respiratory chain. The immediate electron acceptor for the enzyme in this species is believed to be ubiquinone. Couples the redox reaction to proton translocation (for every two electrons transferred, four hydrogen ions are translocated across the cytoplasmic membrane), and thus conserves the redox energy in a proton gradient. This subunit may bind ubiquinone. The protein is NADH-quinone oxidoreductase subunit H of Ruthia magnifica subsp. Calyptogena magnifica.